We begin with the raw amino-acid sequence, 61 residues long: Small ribosomal subunit protein uS14 (61 aa).

Positions 24, 27, 40, and 43 each coordinate Zn(2+).

Belongs to the universal ribosomal protein uS14 family. Zinc-binding uS14 subfamily. In terms of assembly, part of the 30S ribosomal subunit. Contacts proteins S3 and S10. Zn(2+) is required as a cofactor.

In terms of biological role, binds 16S rRNA, required for the assembly of 30S particles and may also be responsible for determining the conformation of the 16S rRNA at the A site. In Clostridium novyi (strain NT), this protein is Small ribosomal subunit protein uS14.